The primary structure comprises 299 residues: uncharacterized protein (299 aa).

The interval 1–20 (MTTKHELVINTNEPSAPNAD) is disordered. A helical membrane pass occupies residues 172–192 (SFFIPPMVVISTPICLGLTVF).

The protein belongs to the IIV-6 259R family.

It localises to the membrane. This is an uncharacterized protein from Acheta domesticus (House cricket).